A 425-amino-acid polypeptide reads, in one-letter code: MEPNGYRKERRKEQHLGRMNGGGGDVETDLDPWTAWAYKPRTISLLLIGACFLIWASGALDPDSTTSDDLVTSVKRGVWAMIAVFLAYSLLQAPSTVLIRPHPAIWRLVHGMAVIYLVALTFLLFQRRDDARQFMKFLHPDLGIELPEKSYGADCRIYVPDHPTNRFKNLYDTVFDEFFLAHIFGWWGKAILIRNQPLLWVLSIGFELLEVTFRHMLPNFNECWWDSIVLDILICNWFGIWAGMYTVRYFDGKTYEWVGISRQPNIIGKVKRTLGQFTPAHWDKDEWHPLQGPWRFIQVLTLCIIFLTVELNTFFLKFSLWIPPRNPVILYRLILWWLIAIPTTREYNSYLQDRKPVKKVGAFCWLSLGICIVELLICIKFGSGLYPTEMPLWVVTLWGSVGLGLVAFLLSWTWKIQKILAQKRR.

Residues 1–16 (MEPNGYRKERRKEQHL) are compositionally biased toward basic and acidic residues. The interval 1–23 (MEPNGYRKERRKEQHLGRMNGGG) is disordered. 9 helical membrane passes run 42–62 (TISL…ALDP), 79–99 (WAMI…TVLI), 105–125 (IWRL…FLLF), 197–217 (PLLW…RHML), 227–247 (SIVL…MYTV), 296–316 (FIQV…TFFL), 321–341 (WIPP…LIAI), 361–381 (GAFC…CIKF), and 390–410 (MPLW…AFLL).

This sequence belongs to the CDP-alcohol phosphatidyltransferase class-I family. As to expression, expressed in trichomes, leaf veins and root vasculature.

The protein resides in the endoplasmic reticulum membrane. It is found in the nucleus envelope. It catalyses the reaction a CDP-1,2-diacyl-sn-glycerol + L-serine = a 1,2-diacyl-sn-glycero-3-phospho-L-serine + CMP + H(+). It participates in phospholipid metabolism; phosphatidylethanolamine biosynthesis; phosphatidylethanolamine from CDP-diacylglycerol: step 1/2. In terms of biological role, catalyzes a base-exchange reaction in which the polar head group of phosphatidylethanolamine (PE) or phosphatidylcholine (PC) is replaced by L-serine. Is essential for phosphatidylserine (PS) biosynthesis and PE seems to be the most plausible substrate. Plays an important role in microspore maturation. The polypeptide is CDP-diacylglycerol--serine O-phosphatidyltransferase 1 (PSS1) (Arabidopsis thaliana (Mouse-ear cress)).